Here is a 118-residue protein sequence, read N- to C-terminus: MARSMNLACVALVMCMVVIAPMAEAAVSCGTVTGDLAPCIPYLTGGAGPTDSCCAGVKKLLAAAPTTADRQAACNCLKTAAGNINNLNPGNAAALPGKCNVNIPYKISTTTNCNTIKF.

A signal peptide spans 1-25 (MARSMNLACVALVMCMVVIAPMAEA). 4 cysteine pairs are disulfide-bonded: cysteine 29-cysteine 76, cysteine 39-cysteine 53, cysteine 54-cysteine 99, and cysteine 74-cysteine 113.

The protein belongs to the plant LTP family.

Functionally, plant non-specific lipid-transfer proteins transfer phospholipids as well as galactolipids across membranes. May play a role in wax or cutin deposition in the cell walls of expanding epidermal cells and certain secretory tissues. This chain is Non-specific lipid-transfer protein 3, found in Lens culinaris (Lentil).